Consider the following 344-residue polypeptide: Thioredoxin domain-containing protein 15 (344 aa).

Positions methionine 1–glycine 20 are cleaved as a signal peptide. At leucine 21 to threonine 305 the chain is on the extracellular side. Disordered stretches follow at residues aspartate 55–glutamine 119 and glycine 136–serine 156. Basic and acidic residues predominate over residues glutamate 88–aspartate 97. Residues glutamate 163–glycine 280 form the Thioredoxin domain. N-linked (GlcNAc...) asparagine glycans are attached at residues asparagine 171, asparagine 178, asparagine 190, and asparagine 277. Residues valine 306 to isoleucine 326 form a helical membrane-spanning segment. The Cytoplasmic portion of the chain corresponds to arginine 327–glutamate 344.

Its subcellular location is the cell projection. It localises to the cilium membrane. Its function is as follows. Acts as a positive regulator of ciliary hedgehog signaling. Required for cilia biogenesis. This Mus musculus (Mouse) protein is Thioredoxin domain-containing protein 15 (Txndc15).